The chain runs to 876 residues: Leucine--tRNA ligase (876 aa).

Residues 43-53 (PYPSGRIHMGH) carry the 'HIGH' region motif. Residues 632 to 636 (KMSKS) carry the 'KMSKS' region motif. Lys-635 is an ATP binding site.

Belongs to the class-I aminoacyl-tRNA synthetase family.

Its subcellular location is the cytoplasm. It carries out the reaction tRNA(Leu) + L-leucine + ATP = L-leucyl-tRNA(Leu) + AMP + diphosphate. The protein is Leucine--tRNA ligase of Sinorhizobium medicae (strain WSM419) (Ensifer medicae).